The chain runs to 506 residues: Aminoaldehyde dehydrogenase 2 (506 aa).

D101 lines the Na(+) pocket. NAD(+) is bound by residues 161 to 163 and 187 to 190; these read TPW and KPSE. Na(+) is bound at residue L191. NAD(+)-binding positions include 241-244 and E262; that span reads STET. E262 functions as the Proton acceptor in the catalytic mechanism. C297 serves as the catalytic Nucleophile. NAD(+)-binding residues include E396 and W462.

This sequence belongs to the aldehyde dehydrogenase family.

It catalyses the reaction 4-aminobutanal + NAD(+) + H2O = 4-aminobutanoate + NADH + 2 H(+). The enzyme catalyses 3-aminopropanal + NAD(+) + H2O = beta-alanine + NADH + 2 H(+). It carries out the reaction 4-(trimethylamino)butanal + NAD(+) + H2O = 4-(trimethylamino)butanoate + NADH + 2 H(+). The catalysed reaction is 4-guanidinobutanal + NAD(+) + H2O = 4-guanidinobutanoate + NADH + 2 H(+). It participates in amine and polyamine biosynthesis; betaine biosynthesis via choline pathway; betaine from betaine aldehyde: step 1/1. Functionally, dehydrogenase that catalyzes the oxidation of several aminoaldehydes. Metabolizes and detoxifies aldehyde products of polyamine degradation to non-toxic amino acids. Catalyzes the oxidation of 4-aminobutanal and 3-aminopropanal to 4-aminobutanoate and beta-alanine, respectively. Catalyzes the oxidation of 4-(trimethylamino)butanal and 4-guanidinobutanal to 4-trimethylammoniobutanoate and 4-guanidinobutanoate, respectively. The sequence is that of Aminoaldehyde dehydrogenase 2 from Zea mays (Maize).